A 76-amino-acid polypeptide reads, in one-letter code: Large ribosomal subunit protein bL31 (76 aa).

The Zn(2+) site is built by cysteine 16, cysteine 18, cysteine 37, and cysteine 40.

It belongs to the bacterial ribosomal protein bL31 family. Type A subfamily. Part of the 50S ribosomal subunit. Zn(2+) serves as cofactor.

Its function is as follows. Binds the 23S rRNA. The polypeptide is Large ribosomal subunit protein bL31 (Maridesulfovibrio salexigens (strain ATCC 14822 / DSM 2638 / NCIMB 8403 / VKM B-1763) (Desulfovibrio salexigens)).